A 241-amino-acid polypeptide reads, in one-letter code: Anthocyanidin 3-O-glucosyltransferase 4 (241 aa).

UDP-alpha-D-glucose-binding residues include Q104, H119, W122, N123, S124, and E127. Position 142 (A142) interacts with an anthocyanidin. The UDP-alpha-D-glucose site is built by E143 and Q144.

The protein belongs to the UDP-glycosyltransferase family. In terms of tissue distribution, faintly expressed in cotyledons, roots and leaves.

The enzyme catalyses an anthocyanidin + UDP-alpha-D-glucose + H(+) = an anthocyanidin 3-O-beta-D-glucoside + UDP. It functions in the pathway pigment biosynthesis; anthocyanin biosynthesis. Functionally, in the presence of other necessary color factors, this glycosylation reaction allows the accumulation of anthocyanin pigments. The sequence is that of Anthocyanidin 3-O-glucosyltransferase 4 (GT4) from Manihot esculenta (Cassava).